A 91-amino-acid polypeptide reads, in one-letter code: Putative membrane protein insertion efficiency factor (91 aa).

Residues serine 72–lysine 91 form a disordered region. The segment covering valine 78–lysine 91 has biased composition (basic and acidic residues).

It belongs to the UPF0161 family.

It is found in the cell inner membrane. Could be involved in insertion of integral membrane proteins into the membrane. This chain is Putative membrane protein insertion efficiency factor, found in Pseudoalteromonas translucida (strain TAC 125).